The primary structure comprises 284 residues: 4-diphosphocytidyl-2-C-methyl-D-erythritol kinase (284 aa).

Residue Lys-9 is part of the active site. Pro-90–Ser-100 contributes to the ATP binding site. Asp-132 is a catalytic residue.

Belongs to the GHMP kinase family. IspE subfamily.

The enzyme catalyses 4-CDP-2-C-methyl-D-erythritol + ATP = 4-CDP-2-C-methyl-D-erythritol 2-phosphate + ADP + H(+). The protein operates within isoprenoid biosynthesis; isopentenyl diphosphate biosynthesis via DXP pathway; isopentenyl diphosphate from 1-deoxy-D-xylulose 5-phosphate: step 3/6. In terms of biological role, catalyzes the phosphorylation of the position 2 hydroxy group of 4-diphosphocytidyl-2C-methyl-D-erythritol. The chain is 4-diphosphocytidyl-2-C-methyl-D-erythritol kinase from Dehalococcoides mccartyi (strain ATCC BAA-2100 / JCM 16839 / KCTC 5957 / BAV1).